The primary structure comprises 1705 residues: Receptor-type tyrosine-protein phosphatase V (1705 aa).

The N-terminal stretch at 1–18 (MRPLILLAALLWLQDSLA) is a signal peptide. Over 19 to 1077 (QEDVCSSLDG…QASISLVAMP (1059 aa)) the chain is Extracellular. Residues 24 to 44 (SSLDGSPDRQGGGPPLSVSVT) form a disordered region. Fibronectin type-III domains are found at residues 37–129 (PPLS…TAPT), 130–222 (VVRG…VPPD), 218–305 (PVPP…EWTY), 306–388 (PSYP…SIWL), 393–454 (ARPM…HYRV), 475–569 (PPQS…APPT), 565–654 (PAPP…TGWT), 655–749 (PPSA…TPNE), 744–831 (PLTP…VLSV), and 832–926 (EPGP…SAEV). 15 N-linked (GlcNAc...) asparagine glycosylation sites follow: asparagine 74, asparagine 89, asparagine 117, asparagine 174, asparagine 239, asparagine 259, asparagine 299, asparagine 345, asparagine 431, asparagine 551, asparagine 570, asparagine 620, asparagine 649, asparagine 663, and asparagine 737. N-linked (GlcNAc...) asparagine glycans are attached at residues asparagine 851, asparagine 882, asparagine 970, and asparagine 982. The chain crosses the membrane as a helical span at residues 1078–1100 (LTVMMGTVVGCIIIVCAVLCLLC). Residues 1101 to 1705 (RRGLKGPRSE…LRNRLPRARK (605 aa)) are Cytoplasmic-facing. Tyrosine-protein phosphatase domains are found at residues 1150 to 1409 (FFQE…LLNK) and 1427 to 1695 (NFAQ…LNSA). Substrate contacts are provided by residues aspartate 1316, 1350 to 1356 (CSAGVGR), and glutamine 1394. The Phosphocysteine intermediate role is filled by cysteine 1350.

This sequence belongs to the protein-tyrosine phosphatase family. Receptor class 3 subfamily.

The protein resides in the membrane. It carries out the reaction O-phospho-L-tyrosyl-[protein] + H2O = L-tyrosyl-[protein] + phosphate. Functionally, protein tyrosine phosphatase that acts as a regulator of energy metabolism by mediating dephosphorylation of insulin receptor (Insr). Prevents decarboxylation of osteocalcin (Bglap and Bglap2) via an indirect mechanism: dephosphorylation of insulin receptor prevents insulin signaling-dependent decarboxylation of osteocalcin, preventing the hormone activity of osteocalcin. May play a role in the maintenance of pluripotency. This Mus musculus (Mouse) protein is Receptor-type tyrosine-protein phosphatase V (Ptprv).